A 171-amino-acid polypeptide reads, in one-letter code: Serine acetyltransferase (171 aa).

Belongs to the transferase hexapeptide repeat family.

It localises to the cytoplasm. The catalysed reaction is L-serine + acetyl-CoA = O-acetyl-L-serine + CoA. The protein operates within amino-acid biosynthesis; L-cysteine biosynthesis; L-cysteine from L-serine: step 1/2. The chain is Serine acetyltransferase (cysE) from Helicobacter pylori (strain J99 / ATCC 700824) (Campylobacter pylori J99).